A 319-amino-acid polypeptide reads, in one-letter code: Acetyl-coenzyme A carboxylase carboxyl transferase subunit alpha (319 aa).

Residues 43-296 (LRDKSIELTR…KKQLLFDLSE (254 aa)) form the CoA carboxyltransferase C-terminal domain.

Belongs to the AccA family. In terms of assembly, acetyl-CoA carboxylase is a heterohexamer composed of biotin carboxyl carrier protein (AccB), biotin carboxylase (AccC) and two subunits each of ACCase subunit alpha (AccA) and ACCase subunit beta (AccD).

The protein localises to the cytoplasm. It carries out the reaction N(6)-carboxybiotinyl-L-lysyl-[protein] + acetyl-CoA = N(6)-biotinyl-L-lysyl-[protein] + malonyl-CoA. It participates in lipid metabolism; malonyl-CoA biosynthesis; malonyl-CoA from acetyl-CoA: step 1/1. In terms of biological role, component of the acetyl coenzyme A carboxylase (ACC) complex. First, biotin carboxylase catalyzes the carboxylation of biotin on its carrier protein (BCCP) and then the CO(2) group is transferred by the carboxyltransferase to acetyl-CoA to form malonyl-CoA. The protein is Acetyl-coenzyme A carboxylase carboxyl transferase subunit alpha of Baumannia cicadellinicola subsp. Homalodisca coagulata.